A 367-amino-acid chain; its full sequence is Glutamate 5-kinase (367 aa).

Lys-10 contributes to the ATP binding site. Ser-50, Asp-137, and Asn-149 together coordinate substrate. Residues 169–170 (TD) and 211–217 (TGGMSTK) contribute to the ATP site. The PUA domain occupies 275–353 (AGEITVDDGA…QQIAEILGYE (79 aa)).

The protein belongs to the glutamate 5-kinase family.

It is found in the cytoplasm. It carries out the reaction L-glutamate + ATP = L-glutamyl 5-phosphate + ADP. It functions in the pathway amino-acid biosynthesis; L-proline biosynthesis; L-glutamate 5-semialdehyde from L-glutamate: step 1/2. Its function is as follows. Catalyzes the transfer of a phosphate group to glutamate to form L-glutamate 5-phosphate. This chain is Glutamate 5-kinase, found in Pectobacterium carotovorum subsp. carotovorum (strain PC1).